The chain runs to 40 residues: VHVGPCDQVCSRIDPEKDECCRAHGYRGHSSCYYGRMECY.

3 disulfides stabilise this stretch: C6-C20, C10-C32, and C21-C39.

As to quaternary structure, monomer. In terms of processing, contains three disulfide bonds. In terms of tissue distribution, hemolymph.

The protein resides in the secreted. Fungicide. The polypeptide is Spodomicin (Spodoptera littoralis (Egyptian cotton leafworm)).